The primary structure comprises 908 residues: Glutamate receptor ionotropic, kainate 2 (908 aa).

Residues 1–31 (MKIISPVLSNLVFSRSIKVLLCLLWIGYSQG) form the signal peptide. Residues 32 to 561 (TTHVLRFGGI…VFSFLNPLSP (530 aa)) are Extracellular-facing. 7 N-linked (GlcNAc...) asparagine glycosylation sites follow: Asn-67, Asn-73, Asn-275, Asn-378, Asn-412, Asn-423, and Asn-430. Cys-96 and Cys-347 are disulfide-bonded. 3 residues coordinate L-glutamate: Pro-516, Ala-518, and Arg-523. Asn-546 carries an N-linked (GlcNAc...) asparagine glycan. The chain crosses the membrane as a helical span at residues 562-582 (DIWMYILLAYLGVSCVLFVIA). The Cytoplasmic portion of the chain corresponds to 583–638 (RFSPYEWYNPHPCNPDSDVVENNFTLLNSFWFGVGALMQQGSELMPKALSTRIVGG). Residues 639–659 (IWWFFTLIIISSYTANLAAFL) form a helical membrane-spanning segment. The Extracellular segment spans residues 660–819 (TVERMESPID…KEASALGVQN (160 aa)). The L-glutamate site is built by Ala-689, Thr-690, and Glu-738. Cys-750 and Cys-804 are joined by a disulfide. A glycan (N-linked (GlcNAc...) asparagine) is linked at Asn-751. A helical membrane pass occupies residues 820–840 (IGGIFIVLAAGLVLSVFVAVG). Residues 841-908 (EFLYKSKKNA…RRLPGKETMA (68 aa)) lie on the Cytoplasmic side of the membrane. Phosphoserine; by PKC is present on residues Ser-846 and Ser-868. Lys-886 is covalently cross-linked (Glycyl lysine isopeptide (Lys-Gly) (interchain with G-Cter in SUMO1)).

It belongs to the glutamate-gated ion channel (TC 1.A.10.1) family. GRIK2 subfamily. As to quaternary structure, homotetramer and heterotetramer with GRIK5. Tetramers may be formed by the dimerization of dimers. Assembles into a kainate-gated homomeric channel that does not bind AMPA. Can form functional heteromeric receptors with GRIK3. Forms a heteromeric complex with GRIK4 and GRIK5. Interacts with DLG4. Interacts (via C-terminus) with KLHL17 (via kelch repeats); the interaction targets GRIK2 for degradation via ubiquitin-proteasome pathway. Interacts with NETO2. Sumoylation mediates kainate receptor-mediated endocytosis and regulates synaptic transmission. Sumoylation is enhanced by PIAS3 and desumoylated by SENP1. In terms of processing, ubiquitinated. Ubiquitination regulates the GRIK2 levels at the synapse by leading kainate receptor degradation through proteasome. Post-translationally, phosphorylated by PKC at Ser-868 upon agonist activation, this directly enhance sumoylation. As to expression, expressed in the hippocampal mossy fiber synapses (at protein level). Most abundant in the cerebellum and the hypothalamus. Expressed in a proportion of dorsal root ganglion (DRG) neurons (13.6%); predominantly small diameter DRG neurons (75%) with the remainder expressed in medium diameter DRG neurons.

The protein localises to the cell membrane. It is found in the postsynaptic cell membrane. It carries out the reaction Ca(2+)(in) = Ca(2+)(out). It catalyses the reaction Na(+)(in) = Na(+)(out). With respect to regulation, cold receptor activity activated by temperatures between 10-19 degrees Celsius. Functionally, ionotropic glutamate receptor that functions as a cation-permeable ligand-gated ion channel, gated by L-glutamate and the glutamatergic agonist kainic acid. L-glutamate acts as an excitatory neurotransmitter at many synapses in the central nervous system. Binding of the excitatory neurotransmitter L-glutamate induces a conformation change, leading to the opening of the cation channel, and thereby converts the chemical signal to an electrical impulse. The receptor then desensitizes rapidly and enters a transient inactive state, characterized by the presence of bound agonist. Modulates cell surface expression of NETO2. In association with GRIK3, involved in presynaptic facilitation of glutamate release at hippocampal mossy fiber synapses. In terms of biological role, independent of its ionotropic glutamate receptor activity, acts as a thermoreceptor conferring sensitivity to cold temperatures. Functions in dorsal root ganglion neurons. Its function is as follows. Ionotropic glutamate receptor that functions as a cation-permeable ligand-gated ion channel, gated by L-glutamate and the glutamatergic agonist kainic acid. The sequence is that of Glutamate receptor ionotropic, kainate 2 (Grik2) from Mus musculus (Mouse).